The sequence spans 682 residues: Polyadenylate-binding protein 5 (682 aa).

RRM domains lie at 59–136, 146–223, 239–316, and 342–419; these read SSLY…LSNR, GNVF…HFVR, TNVY…RAQK, and SNLY…LAQR. Positions 588–665 constitute a PABC domain; the sequence is TISKLASDLA…ALDVLRRSAD (78 aa). Residue S600 is modified to Phosphoserine.

The protein belongs to the polyadenylate-binding protein type-1 family. As to expression, expressed predominantly in immature flowers but also at lower levels in mature flowers and siliques. Detected in tapetum, pollen, ovules and developing seeds. Also detected in primary inflorescences and immature siliques.

The protein localises to the cytoplasm. It is found in the nucleus. Binds the poly(A) tail of mRNA. Appears to be an important mediator of the multiple roles of the poly(A) tail in mRNA biogenesis, stability and translation. The polypeptide is Polyadenylate-binding protein 5 (PAB5) (Arabidopsis thaliana (Mouse-ear cress)).